The sequence spans 354 residues: Biotin synthase (354 aa).

Positions 64–282 (GDVELATLLS…IAVARITMPR (219 aa)) constitute a Radical SAM core domain. The [4Fe-4S] cluster site is built by C79, C83, and C86. The [2Fe-2S] cluster site is built by C123, C154, C214, and R286.

The protein belongs to the radical SAM superfamily. Biotin synthase family. In terms of assembly, homodimer. The cofactor is [4Fe-4S] cluster. It depends on [2Fe-2S] cluster as a cofactor.

The enzyme catalyses (4R,5S)-dethiobiotin + (sulfur carrier)-SH + 2 reduced [2Fe-2S]-[ferredoxin] + 2 S-adenosyl-L-methionine = (sulfur carrier)-H + biotin + 2 5'-deoxyadenosine + 2 L-methionine + 2 oxidized [2Fe-2S]-[ferredoxin]. It functions in the pathway cofactor biosynthesis; biotin biosynthesis; biotin from 7,8-diaminononanoate: step 2/2. Catalyzes the conversion of dethiobiotin (DTB) to biotin by the insertion of a sulfur atom into dethiobiotin via a radical-based mechanism. This is Biotin synthase from Paracidovorax citrulli (strain AAC00-1) (Acidovorax citrulli).